A 280-amino-acid polypeptide reads, in one-letter code: Shikimate kinase (280 aa).

74–84 (PGGSGLGSSSA) serves as a coordination point for ATP.

This sequence belongs to the GHMP kinase family. Archaeal shikimate kinase subfamily.

It localises to the cytoplasm. It carries out the reaction shikimate + ATP = 3-phosphoshikimate + ADP + H(+). It functions in the pathway metabolic intermediate biosynthesis; chorismate biosynthesis; chorismate from D-erythrose 4-phosphate and phosphoenolpyruvate: step 5/7. The sequence is that of Shikimate kinase (aroK) from Archaeoglobus fulgidus (strain ATCC 49558 / DSM 4304 / JCM 9628 / NBRC 100126 / VC-16).